Consider the following 283-residue polypeptide: Bifunctional protein FolD (283 aa).

NADP(+) is bound by residues 166 to 168 and Ile-232; that span reads GAS.

Belongs to the tetrahydrofolate dehydrogenase/cyclohydrolase family. In terms of assembly, homodimer.

The catalysed reaction is (6R)-5,10-methylene-5,6,7,8-tetrahydrofolate + NADP(+) = (6R)-5,10-methenyltetrahydrofolate + NADPH. The enzyme catalyses (6R)-5,10-methenyltetrahydrofolate + H2O = (6R)-10-formyltetrahydrofolate + H(+). It functions in the pathway one-carbon metabolism; tetrahydrofolate interconversion. Its function is as follows. Catalyzes the oxidation of 5,10-methylenetetrahydrofolate to 5,10-methenyltetrahydrofolate and then the hydrolysis of 5,10-methenyltetrahydrofolate to 10-formyltetrahydrofolate. The chain is Bifunctional protein FolD from Wigglesworthia glossinidia brevipalpis.